Reading from the N-terminus, the 148-residue chain is Large ribosomal subunit protein uL13 (148 aa).

Belongs to the universal ribosomal protein uL13 family. As to quaternary structure, part of the 50S ribosomal subunit.

In terms of biological role, this protein is one of the early assembly proteins of the 50S ribosomal subunit, although it is not seen to bind rRNA by itself. It is important during the early stages of 50S assembly. This chain is Large ribosomal subunit protein uL13, found in Oenococcus oeni (strain ATCC BAA-331 / PSU-1).